Reading from the N-terminus, the 546-residue chain is MSDAQAPPASTSWADMVDEDEKQKQEQNMSNQNDGWGETATETSAPAPPPASAPVSSSNNDGWGEPAPSAPADNGWADAGASNGGSGANNNDGWFDAPVPPSSQPPKKEASDIQLQDDTEGLITNTFQVEVKLADLQGDPNSPLYSVQSFKELNLHEDLMKGIIAAGFQKPSKIQEKALPLLLSNPPRNLIGQSQSGTGKTAAFTLNMLSRVDPTIPTPQAICIAPSRELARQIQEVVDQIGQFTQVGTFLAIPGSWSRNSRIDKQILIGTPGTLVDMLMRGSRILDPRMIRVLVLDEADELIAQQGLGEQTFRIKQLLPPNVQNVLFSATFNDDVQEFADRFAPEANKIFLRKEDITVDAIRQLYLECDSEDQKYEALSALYDCLVIGQSIVFCKRKVTADHIAERLISEGHAVASLHGDKLSQERDAILDGFRNGETKVLITTNVIARGIDIPAVNMVVNYDVPDLGPGGNGPDIETYIHRIGRTGRFGRKGCSVIFTHDYRSKSDVERIMNTLGKPMKKIDARSTTDIEQLEKALKLAMKGPA.

The disordered stretch occupies residues 1-113 (MSDAQAPPAS…QPPKKEASDI (113 aa)). The span at 72–81 (ADNGWADAGA) shows a compositional bias: low complexity. The short motif at 148 to 176 (QSFKELNLHEDLMKGIIAAGFQKPSKIQE) is the Q motif element. Residues 181-350 (LLLSNPPRNL…DRFAPEANKI (170 aa)) form the Helicase ATP-binding domain. ATP is bound at residue 194 to 201 (SQSGTGKT). A DEAD box motif is present at residues 297–300 (DEAD). Positions 361–531 (AIRQLYLECD…KIDARSTTDI (171 aa)) constitute a Helicase C-terminal domain.

The protein belongs to the DEAD box helicase family. DDX19/DBP5 subfamily. In terms of assembly, associates with the nuclear pore complex.

It localises to the cytoplasm. Its subcellular location is the nucleus. The protein localises to the nuclear pore complex. It is found in the nucleus membrane. The catalysed reaction is ATP + H2O = ADP + phosphate + H(+). Its function is as follows. ATP-dependent RNA helicase associated with the nuclear pore complex and essential for mRNA export from the nucleus. May participate in a terminal step of mRNA export through the removal of proteins that accompany mRNA through the nucleopore complex. May also be involved in early transcription. The sequence is that of ATP-dependent RNA helicase DBP5 (DBP5) from Cryptococcus neoformans var. neoformans serotype D (strain B-3501A) (Filobasidiella neoformans).